Reading from the N-terminus, the 291-residue chain is ATP synthase gamma chain (291 aa).

It belongs to the ATPase gamma chain family. F-type ATPases have 2 components, CF(1) - the catalytic core - and CF(0) - the membrane proton channel. CF(1) has five subunits: alpha(3), beta(3), gamma(1), delta(1), epsilon(1). CF(0) has three main subunits: a, b and c.

The protein resides in the cell inner membrane. In terms of biological role, produces ATP from ADP in the presence of a proton gradient across the membrane. The gamma chain is believed to be important in regulating ATPase activity and the flow of protons through the CF(0) complex. This Cupriavidus pinatubonensis (strain JMP 134 / LMG 1197) (Cupriavidus necator (strain JMP 134)) protein is ATP synthase gamma chain.